Consider the following 932-residue polypeptide: Probable UDP-N-acetylglucosamine--peptide N-acetylglucosaminyltransferase SPINDLY (932 aa).

Positions 1–15 are enriched in basic and acidic residues; that stretch reads MAWTEKDVENGKESD. Residues 1–39 form a disordered region; the sequence is MAWTEKDVENGKESDSLGNNGFLKGVQSSSDSKGSPVRI. TPR repeat units lie at residues 48–81, 82–115, 116–149, 157–190, 191–224, 225–258, 266–299, 300–333, 334–367, 369–401, and 402–435; these read GKDAITYANILRSRNKFVDALAIYESVLQKDSGS, IESLIGKGICLQMQNMGRLAFESFAEAIKLDPQN, ACALTHCGILYKDEGRLVEAAESYQKALKADPSY, AIVLTDIGTSLKLAGNSQEGIQKYYEAIKIDSHY, APAYYNLGVVYSEMMQYDMALNCYEKAAIERPMY, AEAYCNMGVIYKNRGDLESAIACYERCLAVSPNF, AIALTDLGTKVKLEGDINQGVAYYKKALYYNWHY, ADAMYNLGVAYGEMLKFDMAIVFYELAFHFNPHC, AEACNNLGVIYKDRDNLDKAVECYQMALTIKPNF, QSLNNLGVVYTVQGKMDAAASMIEKAIIANPTY, and AEAYNNLGVLYRDAGNISLAIEAYEQCLKIDPDS. A catalytic region region spans residues 436–932; the sequence is RNAGQNRLLA…NQAGNPGKQS (497 aa). The disordered stretch occupies residues 881 to 902; that stretch reads VSPIEKTRISASKDGPIKENGF.

Belongs to the glycosyltransferase 41 family. O-GlcNAc transferase subfamily. As to expression, expressed in stems, leaves and flowers. Expressed during all stages of corolla maturation.

It is found in the nucleus. The enzyme catalyses L-seryl-[protein] + UDP-N-acetyl-alpha-D-glucosamine = 3-O-(N-acetyl-beta-D-glucosaminyl)-L-seryl-[protein] + UDP + H(+). The catalysed reaction is L-threonyl-[protein] + UDP-N-acetyl-alpha-D-glucosamine = 3-O-(N-acetyl-beta-D-glucosaminyl)-L-threonyl-[protein] + UDP + H(+). It functions in the pathway protein modification; protein glycosylation. Probable O-linked N-acetylglucosamine transferase (OGT) involved in various processes such as gibberellin (GA) signaling pathway. OGTs catalyze the addition of nucleotide-activated sugars directly onto the polypeptide through O-glycosidic linkage with the hydroxyl of serine or threonine. Probably acts by adding O-linked sugars to yet unknown proteins. The polypeptide is Probable UDP-N-acetylglucosamine--peptide N-acetylglucosaminyltransferase SPINDLY (SPY) (Petunia hybrida (Petunia)).